A 266-amino-acid chain; its full sequence is Putative pyruvate, phosphate dikinase regulatory protein (266 aa).

Gly149–Thr156 lines the ADP pocket.

This sequence belongs to the pyruvate, phosphate/water dikinase regulatory protein family. PDRP subfamily.

It carries out the reaction N(tele)-phospho-L-histidyl/L-threonyl-[pyruvate, phosphate dikinase] + ADP = N(tele)-phospho-L-histidyl/O-phospho-L-threonyl-[pyruvate, phosphate dikinase] + AMP + H(+). The enzyme catalyses N(tele)-phospho-L-histidyl/O-phospho-L-threonyl-[pyruvate, phosphate dikinase] + phosphate + H(+) = N(tele)-phospho-L-histidyl/L-threonyl-[pyruvate, phosphate dikinase] + diphosphate. Its function is as follows. Bifunctional serine/threonine kinase and phosphorylase involved in the regulation of the pyruvate, phosphate dikinase (PPDK) by catalyzing its phosphorylation/dephosphorylation. This Geobacillus kaustophilus (strain HTA426) protein is Putative pyruvate, phosphate dikinase regulatory protein.